We begin with the raw amino-acid sequence, 209 residues long: Uracil phosphoribosyltransferase (209 aa).

5-phospho-alpha-D-ribose 1-diphosphate is bound by residues Arg-79, Arg-104, and 131–139 (DPMLATGGS). Residues Ile-194 and 199–201 (GDA) contribute to the uracil site. A 5-phospho-alpha-D-ribose 1-diphosphate-binding site is contributed by Asp-200.

Belongs to the UPRTase family. Mg(2+) serves as cofactor.

The catalysed reaction is UMP + diphosphate = 5-phospho-alpha-D-ribose 1-diphosphate + uracil. Its pathway is pyrimidine metabolism; UMP biosynthesis via salvage pathway; UMP from uracil: step 1/1. Its activity is regulated as follows. Allosterically activated by GTP. Catalyzes the conversion of uracil and 5-phospho-alpha-D-ribose 1-diphosphate (PRPP) to UMP and diphosphate. This chain is Uracil phosphoribosyltransferase, found in Streptococcus sanguinis (strain SK36).